The primary structure comprises 382 residues: Mannitol-1-phosphate 5-dehydrogenase (382 aa).

NAD(+) is bound at residue 4–15 (AVHFGAGNIGRG).

Belongs to the mannitol dehydrogenase family.

It catalyses the reaction D-mannitol 1-phosphate + NAD(+) = beta-D-fructose 6-phosphate + NADH + H(+). The chain is Mannitol-1-phosphate 5-dehydrogenase from Vibrio campbellii (strain ATCC BAA-1116).